A 229-amino-acid chain; its full sequence is uncharacterized protein (229 aa).

This is an uncharacterized protein from Ureaplasma parvum serovar 3 (strain ATCC 700970).